Reading from the N-terminus, the 317-residue chain is Transaldolase A (317 aa).

Residue lysine 132 is the Schiff-base intermediate with substrate of the active site.

Belongs to the transaldolase family. Type 1 subfamily. In terms of assembly, homodimer.

It localises to the cytoplasm. It catalyses the reaction D-sedoheptulose 7-phosphate + D-glyceraldehyde 3-phosphate = D-erythrose 4-phosphate + beta-D-fructose 6-phosphate. It participates in carbohydrate degradation; pentose phosphate pathway; D-glyceraldehyde 3-phosphate and beta-D-fructose 6-phosphate from D-ribose 5-phosphate and D-xylulose 5-phosphate (non-oxidative stage): step 2/3. Its function is as follows. Transaldolase is important for the balance of metabolites in the pentose-phosphate pathway. This Pasteurella multocida (strain Pm70) protein is Transaldolase A (talA).